The primary structure comprises 104 residues: Small ribosomal subunit protein uS10 (104 aa).

The protein belongs to the universal ribosomal protein uS10 family. As to quaternary structure, part of the 30S ribosomal subunit.

Involved in the binding of tRNA to the ribosomes. This Variovorax paradoxus (strain S110) protein is Small ribosomal subunit protein uS10.